Reading from the N-terminus, the 1486-residue chain is Chromosome partition protein MukB (1486 aa).

34–41 (GGNGAGKS) contacts ATP. Coiled-coil stretches lie at residues 326–418 (LEAD…QYNQ), 444–480 (LETF…QAYQ), and 509–603 (RHLA…RAPV). The segment at 666–783 (PGGSEDQRLN…EVPLFGRAAR (118 aa)) is flexible hinge. Coiled coils occupy residues 835 to 923 (EAEI…AKLE), 977 to 1115 (EMLS…TAKA), and 1209 to 1266 (VEAI…QNVS).

The protein belongs to the SMC family. MukB subfamily. Homodimerization via its hinge domain. Binds to DNA via its C-terminal region. Interacts, and probably forms a ternary complex, with MukE and MukF via its C-terminal region. The complex formation is stimulated by calcium or magnesium. Interacts with tubulin-related protein FtsZ.

The protein localises to the cytoplasm. Its subcellular location is the nucleoid. In terms of biological role, plays a central role in chromosome condensation, segregation and cell cycle progression. Functions as a homodimer, which is essential for chromosome partition. Involved in negative DNA supercoiling in vivo, and by this means organize and compact chromosomes. May achieve or facilitate chromosome segregation by condensation DNA from both sides of a centrally located replisome during cell division. The chain is Chromosome partition protein MukB from Escherichia coli O127:H6 (strain E2348/69 / EPEC).